The chain runs to 179 residues: Large ribosomal subunit protein uL6 (179 aa).

The protein belongs to the universal ribosomal protein uL6 family. Part of the 50S ribosomal subunit.

In terms of biological role, this protein binds to the 23S rRNA, and is important in its secondary structure. It is located near the subunit interface in the base of the L7/L12 stalk, and near the tRNA binding site of the peptidyltransferase center. This Clostridium acetobutylicum (strain ATCC 824 / DSM 792 / JCM 1419 / IAM 19013 / LMG 5710 / NBRC 13948 / NRRL B-527 / VKM B-1787 / 2291 / W) protein is Large ribosomal subunit protein uL6.